The chain runs to 375 residues: F-box/kelch-repeat protein At4g39580 (375 aa).

The 47-residue stretch at 20–66 folds into the F-box domain; it reads PTTNLFLPDDILLSSLSRISRLYYPTFSLVSKSFRSLIASPELYQTR. Kelch repeat units lie at residues 132 to 178, 179 to 225, and 229 to 269; these read NIYA…VLDG, KIYV…KSVG, and KYHL…VINN.

In Arabidopsis thaliana (Mouse-ear cress), this protein is F-box/kelch-repeat protein At4g39580.